We begin with the raw amino-acid sequence, 347 residues long: tRNA N6-adenosine threonylcarbamoyltransferase (347 aa).

Fe cation contacts are provided by His-113 and His-117. Substrate contacts are provided by residues 136 to 140, Asp-170, Gly-183, Asp-187, and Asn-282; that span reads IVSGG. Asp-310 is a Fe cation binding site.

The protein belongs to the KAE1 / TsaD family. It depends on Fe(2+) as a cofactor.

It localises to the cytoplasm. The catalysed reaction is L-threonylcarbamoyladenylate + adenosine(37) in tRNA = N(6)-L-threonylcarbamoyladenosine(37) in tRNA + AMP + H(+). Its function is as follows. Required for the formation of a threonylcarbamoyl group on adenosine at position 37 (t(6)A37) in tRNAs that read codons beginning with adenine. Is involved in the transfer of the threonylcarbamoyl moiety of threonylcarbamoyl-AMP (TC-AMP) to the N6 group of A37, together with TsaE and TsaB. TsaD likely plays a direct catalytic role in this reaction. This is tRNA N6-adenosine threonylcarbamoyltransferase from Bifidobacterium longum (strain NCC 2705).